The following is an 87-amino-acid chain: Small ribosomal subunit protein bS20 (87 aa).

Residues 1–11 show a composition bias toward basic residues; that stretch reads MAHHKSAIKRI. A disordered region spans residues 1 to 26; it reads MAHHKSAIKRIKQNEKRNARNRHQKS.

Belongs to the bacterial ribosomal protein bS20 family.

In terms of biological role, binds directly to 16S ribosomal RNA. The protein is Small ribosomal subunit protein bS20 of Trichlorobacter lovleyi (strain ATCC BAA-1151 / DSM 17278 / SZ) (Geobacter lovleyi).